A 458-amino-acid chain; its full sequence is Maturase-like protein 1 (458 aa).

The protein to group II intron maturases.

It localises to the plastid. It is found in the chloroplast. Functionally, could be required for group III intron excision. The protein is Maturase-like protein 1 (mat1) of Euglena gracilis.